The chain runs to 139 residues: ATP synthase epsilon chain (139 aa).

The protein belongs to the ATPase epsilon chain family. In terms of assembly, F-type ATPases have 2 components, CF(1) - the catalytic core - and CF(0) - the membrane proton channel. CF(1) has five subunits: alpha(3), beta(3), gamma(1), delta(1), epsilon(1). CF(0) has three main subunits: a, b and c.

Its subcellular location is the cell inner membrane. Produces ATP from ADP in the presence of a proton gradient across the membrane. This Marinomonas sp. (strain MWYL1) protein is ATP synthase epsilon chain.